We begin with the raw amino-acid sequence, 469 residues long: UDP-N-acetylmuramoylalanine--D-glutamate ligase (469 aa).

An ATP-binding site is contributed by 121-127; sequence GTNGKST.

Belongs to the MurCDEF family.

It localises to the cytoplasm. The catalysed reaction is UDP-N-acetyl-alpha-D-muramoyl-L-alanine + D-glutamate + ATP = UDP-N-acetyl-alpha-D-muramoyl-L-alanyl-D-glutamate + ADP + phosphate + H(+). It participates in cell wall biogenesis; peptidoglycan biosynthesis. In terms of biological role, cell wall formation. Catalyzes the addition of glutamate to the nucleotide precursor UDP-N-acetylmuramoyl-L-alanine (UMA). In Rhodopseudomonas palustris (strain ATCC BAA-98 / CGA009), this protein is UDP-N-acetylmuramoylalanine--D-glutamate ligase.